The sequence spans 983 residues: Envelope glycoprotein gp160 (983 aa).

The span at 1–20 (MASKESKPSRTTRRGMEPPL) shows a compositional bias: basic and acidic residues. Residues 1–22 (MASKESKPSRTTRRGMEPPLRE) are disordered. An N-terminal signal peptide occupies residues 1–106 (MASKESKPSR…CLMWEVRKGN (106 aa)). Residues 107–832 (QCQAEEVIAL…WSSWFSWLKY (726 aa)) lie on the Extracellular side of the membrane. N-linked (GlcNAc...) asparagine; by host glycosylation is found at asparagine 140, asparagine 161, asparagine 206, asparagine 258, asparagine 298, asparagine 364, asparagine 381, asparagine 387, asparagine 403, asparagine 414, asparagine 435, asparagine 439, asparagine 470, asparagine 475, asparagine 481, asparagine 491, asparagine 501, asparagine 515, asparagine 527, asparagine 537, asparagine 542, asparagine 543, and asparagine 568. The interval 657 to 677 (GIGLVIVLAIMAIIAAAGAGL) is fusion peptide. Positions 689 to 739 (RTAVQSLANATAAQQEVLEASYAMVQHIAKGIRILEARVARVEALVDRMMV) form a coiled coil. A glycan (N-linked (GlcNAc...) asparagine; by host) is linked at asparagine 697. The interval 723–739 (LEARVARVEALVDRMMV) is immunosuppression. Residues asparagine 765, asparagine 772, asparagine 788, and asparagine 822 are each glycosylated (N-linked (GlcNAc...) asparagine; by host). The stretch at 780–815 (EEIEQHEGNLSLLLREAALQVHIAQRDARRIPDAWK) forms a coiled coil. Residues 833 to 853 (IPWIIMGIVGLMCFRILMCVI) traverse the membrane as a helical segment. Topologically, residues 854–983 (SMCLQAYKQV…PTLENDYVEL (130 aa)) are cytoplasmic. Cysteine 856 is lipidated: S-palmitoyl cysteine; by host.

The mature envelope protein (Env) consists of a trimer of SU-TM heterodimers attached by noncovalent interactions or by a labile interchain disulfide bond. In terms of processing, specific enzymatic cleavages in vivo yield mature proteins. Envelope glycoproteins are synthesized as an inactive precursor that is N-glycosylated and processed likely by host cell furin or by a furin-like protease in the Golgi to yield the mature SU and TM proteins. The cleavage site between SU and TM requires the minimal sequence [KR]-X-[KR]-R. Post-translationally, the transmembrane protein is palmitoylated.

Its subcellular location is the virion membrane. It localises to the host cell membrane. Functionally, the surface protein (SU) attaches the virus to the host cell by binding to its receptor. This interaction triggers the refolding of the transmembrane protein (TM) and is thought to activate its fusogenic potential by unmasking its fusion peptide. Fusion occurs at the host cell plasma membrane. Its function is as follows. The transmembrane protein (TM) acts as a class I viral fusion protein. Under the current model, the protein has at least 3 conformational states: pre-fusion native state, pre-hairpin intermediate state, and post-fusion hairpin state. During viral and target cell membrane fusion, the coiled coil regions (heptad repeats) assume a trimer-of-hairpins structure, positioning the fusion peptide in close proximity to the C-terminal region of the ectodomain. The formation of this structure appears to drive apposition and subsequent fusion of viral and target cell membranes. Membranes fusion leads to delivery of the nucleocapsid into the cytoplasm. This is Envelope glycoprotein gp160 (env) from Maedi visna virus (strain KV1772) (MVV).